We begin with the raw amino-acid sequence, 86 residues long: Small ribosomal subunit protein uS17 (86 aa).

The protein belongs to the universal ribosomal protein uS17 family. Part of the 30S ribosomal subunit.

One of the primary rRNA binding proteins, it binds specifically to the 5'-end of 16S ribosomal RNA. The chain is Small ribosomal subunit protein uS17 from Dehalococcoides mccartyi (strain ATCC BAA-2266 / KCTC 15142 / 195) (Dehalococcoides ethenogenes (strain 195)).